The sequence spans 201 residues: Holliday junction branch migration complex subunit RuvA (201 aa).

The interval 1 to 63 (MIAYLSGVVR…EDAQLLFGFP (63 aa)) is domain I. Residues 64–142 (DADHLKLFDL…EHLAAAASGA (79 aa)) form a domain II region. The segment at 143 to 150 (AGGKRPAR) is flexible linker. Residues 151–201 (VSSTAGHDAVDALLALGFREAQVRAAVAELLGADPEASADTLIRKALGRLR) are domain III.

The protein belongs to the RuvA family. In terms of assembly, homotetramer. Forms an RuvA(8)-RuvB(12)-Holliday junction (HJ) complex. HJ DNA is sandwiched between 2 RuvA tetramers; dsDNA enters through RuvA and exits via RuvB. An RuvB hexamer assembles on each DNA strand where it exits the tetramer. Each RuvB hexamer is contacted by two RuvA subunits (via domain III) on 2 adjacent RuvB subunits; this complex drives branch migration. In the full resolvosome a probable DNA-RuvA(4)-RuvB(12)-RuvC(2) complex forms which resolves the HJ.

Its subcellular location is the cytoplasm. Its function is as follows. The RuvA-RuvB-RuvC complex processes Holliday junction (HJ) DNA during genetic recombination and DNA repair, while the RuvA-RuvB complex plays an important role in the rescue of blocked DNA replication forks via replication fork reversal (RFR). RuvA specifically binds to HJ cruciform DNA, conferring on it an open structure. The RuvB hexamer acts as an ATP-dependent pump, pulling dsDNA into and through the RuvAB complex. HJ branch migration allows RuvC to scan DNA until it finds its consensus sequence, where it cleaves and resolves the cruciform DNA. This is Holliday junction branch migration complex subunit RuvA from Deinococcus radiodurans (strain ATCC 13939 / DSM 20539 / JCM 16871 / CCUG 27074 / LMG 4051 / NBRC 15346 / NCIMB 9279 / VKM B-1422 / R1).